The sequence spans 394 residues: Bifunctional enzyme IspD/IspF (394 aa).

The tract at residues 1-230 is 2-C-methyl-D-erythritol 4-phosphate cytidylyltransferase; sequence MADTLAIVVA…AEALLGGGPV (230 aa). Positions 231-394 are 2-C-methyl-D-erythritol 2,4-cyclodiphosphate synthase; it reads LVGFGYDVHR…RIVLPGDRVL (164 aa). Residues D237 and H239 each contribute to the a divalent metal cation site. 4-CDP-2-C-methyl-D-erythritol 2-phosphate is bound by residues 237 to 239 and 263 to 264; these read DVH and HS. A divalent metal cation is bound at residue H271. Residues 285-287, 290-294, 361-364, and F368 each bind 4-CDP-2-C-methyl-D-erythritol 2-phosphate; these read DIG, FPDDD, and TTTE.

This sequence in the N-terminal section; belongs to the IspD/TarI cytidylyltransferase family. IspD subfamily. The protein in the C-terminal section; belongs to the IspF family. Requires a divalent metal cation as cofactor.

The enzyme catalyses 2-C-methyl-D-erythritol 4-phosphate + CTP + H(+) = 4-CDP-2-C-methyl-D-erythritol + diphosphate. The catalysed reaction is 4-CDP-2-C-methyl-D-erythritol 2-phosphate = 2-C-methyl-D-erythritol 2,4-cyclic diphosphate + CMP. It functions in the pathway isoprenoid biosynthesis; isopentenyl diphosphate biosynthesis via DXP pathway; isopentenyl diphosphate from 1-deoxy-D-xylulose 5-phosphate: step 2/6. The protein operates within isoprenoid biosynthesis; isopentenyl diphosphate biosynthesis via DXP pathway; isopentenyl diphosphate from 1-deoxy-D-xylulose 5-phosphate: step 4/6. Its function is as follows. Bifunctional enzyme that catalyzes the formation of 4-diphosphocytidyl-2-C-methyl-D-erythritol from CTP and 2-C-methyl-D-erythritol 4-phosphate (MEP) (IspD), and catalyzes the conversion of 4-diphosphocytidyl-2-C-methyl-D-erythritol 2-phosphate (CDP-ME2P) to 2-C-methyl-D-erythritol 2,4-cyclodiphosphate (ME-CPP) with a corresponding release of cytidine 5-monophosphate (CMP) (IspF). The protein is Bifunctional enzyme IspD/IspF of Desulforudis audaxviator (strain MP104C).